A 200-amino-acid polypeptide reads, in one-letter code: MAASAGPEIERLIALLSKLPGLGPRSGRRAALALLKKRDTLLAPLATAMAEAQAKVRTCGTCGSLDVTDPCAVCADGSRDGRLLCVVEEVGSVWAMERGGSFKGRYHVLGGLLSALDGIGPEALRIGELVGRVADGSVAEVILALPATVDGQTTAHYIADRLAKTNVPVTMLARGVPVGGDLDWLDDGTIAQALRARRPA.

A C4-type zinc finger spans residues 59–74 (CGTCGSLDVTDPCAVC). Residues 82–177 (RLLCVVEEVG…PVTMLARGVP (96 aa)) enclose the Toprim domain.

This sequence belongs to the RecR family.

Its function is as follows. May play a role in DNA repair. It seems to be involved in an RecBC-independent recombinational process of DNA repair. It may act with RecF and RecO. This chain is Recombination protein RecR, found in Caulobacter vibrioides (strain ATCC 19089 / CIP 103742 / CB 15) (Caulobacter crescentus).